We begin with the raw amino-acid sequence, 234 residues long: Ribonuclease 3 (234 aa).

The RNase III domain maps to 4-133 (LLDLEHKLNY…ILGAVYIDSN (130 aa)). Glutamate 46 lines the Mg(2+) pocket. The active site involves aspartate 50. Mg(2+) contacts are provided by aspartate 119 and glutamate 122. Glutamate 122 is an active-site residue. One can recognise a DRBM domain in the interval 160–228 (DFKSILQEYV…AKALCIKLGV (69 aa)).

It belongs to the ribonuclease III family. Homodimer. Mg(2+) serves as cofactor.

The protein localises to the cytoplasm. The catalysed reaction is Endonucleolytic cleavage to 5'-phosphomonoester.. Functionally, digests double-stranded RNA. Involved in the processing of primary rRNA transcript to yield the immediate precursors to the large and small rRNAs (23S and 16S). Processes some mRNAs, and tRNAs when they are encoded in the rRNA operon. Processes pre-crRNA and tracrRNA of type II CRISPR loci if present in the organism. In Fusobacterium nucleatum subsp. nucleatum (strain ATCC 25586 / DSM 15643 / BCRC 10681 / CIP 101130 / JCM 8532 / KCTC 2640 / LMG 13131 / VPI 4355), this protein is Ribonuclease 3.